Here is a 448-residue protein sequence, read N- to C-terminus: Chaperone SurA (448 aa).

Positions 1-27 (MKKTLRFAAVASGLVASLITVAPSASA) are cleaved as a signal peptide. 2 consecutive PpiC domains span residues 185–288 (QQDL…RLVE) and 301–399 (IVQT…QVLG).

It is found in the periplasm. It carries out the reaction [protein]-peptidylproline (omega=180) = [protein]-peptidylproline (omega=0). Chaperone involved in the correct folding and assembly of outer membrane proteins. Recognizes specific patterns of aromatic residues and the orientation of their side chains, which are found more frequently in integral outer membrane proteins. May act in both early periplasmic and late outer membrane-associated steps of protein maturation. This is Chaperone SurA from Burkholderia pseudomallei (strain 1710b).